We begin with the raw amino-acid sequence, 304 residues long: N-acetylmuramic acid 6-phosphate etherase (304 aa).

Residues 62–225 enclose the SIS domain; the sequence is IVTAFRQGGR…TTASMILMGK (164 aa). The active-site Proton donor is E90. E121 is a catalytic residue.

The protein belongs to the GCKR-like family. MurNAc-6-P etherase subfamily. Homodimer.

It carries out the reaction N-acetyl-D-muramate 6-phosphate + H2O = N-acetyl-D-glucosamine 6-phosphate + (R)-lactate. The protein operates within amino-sugar metabolism; 1,6-anhydro-N-acetylmuramate degradation. Its pathway is amino-sugar metabolism; N-acetylmuramate degradation. It functions in the pathway cell wall biogenesis; peptidoglycan recycling. In terms of biological role, specifically catalyzes the cleavage of the D-lactyl ether substituent of MurNAc 6-phosphate, producing GlcNAc 6-phosphate and D-lactate. Together with AnmK, is also required for the utilization of anhydro-N-acetylmuramic acid (anhMurNAc) either imported from the medium or derived from its own cell wall murein, and thus plays a role in cell wall recycling. This chain is N-acetylmuramic acid 6-phosphate etherase, found in Actinobacillus succinogenes (strain ATCC 55618 / DSM 22257 / CCUG 43843 / 130Z).